The sequence spans 452 residues: 23S rRNA (uracil(1939)-C(5))-methyltransferase RlmD (452 aa).

The tract at residues 1–25 is disordered; it reads MSKKKSNSGLRFQPAGGNRTPQVPV. Residues 22–80 form the TRAM domain; it reads QVPVGKKQRLDIERLAGDGRGIAFLDGRTWFVSGALAGEAVEARVLNARGKVVEARLER. 4 residues coordinate [4Fe-4S] cluster: Cys-93, Cys-99, Cys-102, and Cys-181. S-adenosyl-L-methionine-binding residues include Gln-285, Phe-314, Asn-319, Glu-335, Asp-362, and Asp-383. The active-site Nucleophile is the Cys-409.

It belongs to the class I-like SAM-binding methyltransferase superfamily. RNA M5U methyltransferase family. RlmD subfamily.

The catalysed reaction is uridine(1939) in 23S rRNA + S-adenosyl-L-methionine = 5-methyluridine(1939) in 23S rRNA + S-adenosyl-L-homocysteine + H(+). Its function is as follows. Catalyzes the formation of 5-methyl-uridine at position 1939 (m5U1939) in 23S rRNA. This is 23S rRNA (uracil(1939)-C(5))-methyltransferase RlmD from Pseudomonas putida (strain ATCC 47054 / DSM 6125 / CFBP 8728 / NCIMB 11950 / KT2440).